The primary structure comprises 716 residues: Polyribonucleotide nucleotidyltransferase (716 aa).

2 residues coordinate Mg(2+): Asp490 and Asp496. One can recognise a KH domain in the interval 556 to 615 (PKIETLTIPTDKIREVIGSGGKVIREIVETSGAKVDINDDGVIKIASNDQAAIKKAYDMI). Residues 625–693 (GQIYTGKVVK…ERGKVRLGMK (69 aa)) form the S1 motif domain. The tract at residues 695-716 (VDQETGQEIQPEKKEREEAGEA) is disordered. Basic and acidic residues predominate over residues 704–716 (QPEKKEREEAGEA).

It belongs to the polyribonucleotide nucleotidyltransferase family. Requires Mg(2+) as cofactor.

It localises to the cytoplasm. The enzyme catalyses RNA(n+1) + phosphate = RNA(n) + a ribonucleoside 5'-diphosphate. Its function is as follows. Involved in mRNA degradation. Catalyzes the phosphorolysis of single-stranded polyribonucleotides processively in the 3'- to 5'-direction. The protein is Polyribonucleotide nucleotidyltransferase of Cereibacter sphaeroides (strain KD131 / KCTC 12085) (Rhodobacter sphaeroides).